Here is a 232-residue protein sequence, read N- to C-terminus: MKQKYQYIKNTELDLKDKIFGINKPKNFSSNQVIQIIKKYYGLKKIGHAGTLDPLATGLLLVATNSKTKELNELILENKKYVAEIQFNYQTSTYDAEGEITNYTTRKIHEKTLKEELKFLNSTYWYQQPPVYSAVKIKGKKLYEYARANQEVSVPFKKVYINKVELISFDSISQKTFVSLDVSKGFYIRSFANDIGLRLNNYGYLLNLKRVEVGNYKLDQAYDFFDLVKQVN.

Residue Asp-53 is the Nucleophile of the active site.

The protein belongs to the pseudouridine synthase TruB family. Type 1 subfamily.

It catalyses the reaction uridine(55) in tRNA = pseudouridine(55) in tRNA. Responsible for synthesis of pseudouridine from uracil-55 in the psi GC loop of transfer RNAs. In Malacoplasma penetrans (strain HF-2) (Mycoplasma penetrans), this protein is tRNA pseudouridine synthase B.